Consider the following 492-residue polypeptide: Catalase isozyme B (492 aa).

The segment at 1-20 is disordered; the sequence is MDPYKHRPSSGSNSTFWTTN. Over residues 9-20 the composition is skewed to polar residues; the sequence is SSGSNSTFWTTN. Heme is bound at residue Arg62. His65 is a catalytic residue. Arg102 contributes to the heme binding site. Asn138 is a catalytic residue. Residue Phe151 coordinates heme. A Phosphotyrosine modification is found at Tyr210. Residues 325 to 348 constitute a cross-link (3-(S-cysteinyl)-tyrosine (Cys-Tyr)); the sequence is CPAIIVPGIHYSDDKLLQTRIFSY. Heme-binding residues include Arg344, Tyr348, and Arg355. The short motif at 484-492 is the Peroxisome targeting signal element; that stretch reads SRLNLKPNM.

Belongs to the catalase family. Homotetramer. Interacts with GLO1 and GLO4; these interactions are disturbed by alpha-hydroxy-2-pyridinemethanesulfonic acid (HPMS) and salicylic acid (SA). Interacts with STRK1 at the plasma membrane. It depends on heme as a cofactor. Predominantly expressed in roots and, at low levels, in leaves (e.g. sheaths). Detected in seeds. Also present in panicles and culms. Observed in stems and anthers.

It is found in the peroxisome. The protein resides in the glyoxysome. The protein localises to the cell membrane. It carries out the reaction 2 H2O2 = O2 + 2 H2O. Strongly inhibited by beta-mercaptoethanol, sodium azide and potassium cyanide. Slightly repressed by 3-amino-1,2,4-triazole (3-AT). Activity is repressed proportionally to increased concentration of NaCl, KCl, LiCl and MgCl(2). In terms of biological role, occurs in almost all aerobically respiring organisms and serves to protect cells from the toxic effects of hydrogen peroxide. May prevent the excessive accumulation of H(2)O(2) during water stress in response to the accumulation of abscisic acid (ABA). Involved in the modulation of ROS levels related to root growth regulation. Required for pollen viability and floret fertility upon heat stress (HS) by detoxifying reactive oxygen species (ROS) and malondialdehyde (MDA) accumulation in developing anthers exposed to HS. This chain is Catalase isozyme B (CATB), found in Oryza sativa subsp. japonica (Rice).